The primary structure comprises 446 residues: F-box/LRR-repeat protein At4g29420 (446 aa).

An F-box domain is found at 1-51; it reads MDELPPELWIKILSRINDSESLARCRVASKTLNSLSREVRAVNLICTWSRY. 8 LRR repeats span residues 59–84, 103–130, 135–160, 181–206, 223–248, 265–289, 318–343, and 382–407; these read VVTP…SVGV, DLYL…SISD, SCWR…EVKN, FIRL…NLIG, CHWT…KLKC, HLSV…ELVS, QSER…SLSP, and NVHQ…RLMI.

The sequence is that of F-box/LRR-repeat protein At4g29420 from Arabidopsis thaliana (Mouse-ear cress).